Here is a 429-residue protein sequence, read N- to C-terminus: Glutamate--tRNA ligase 1 (429 aa).

Residues 6-16 (PSPTGDMHIGN) carry the 'HIGH' region motif. Positions 235–239 (KMSKR) match the 'KMSKS' region motif. K238 contributes to the ATP binding site.

Belongs to the class-I aminoacyl-tRNA synthetase family. Glutamate--tRNA ligase type 1 subfamily. As to quaternary structure, monomer.

It is found in the cytoplasm. It catalyses the reaction tRNA(Glu) + L-glutamate + ATP = L-glutamyl-tRNA(Glu) + AMP + diphosphate. Functionally, catalyzes the attachment of glutamate to tRNA(Glu) in a two-step reaction: glutamate is first activated by ATP to form Glu-AMP and then transferred to the acceptor end of tRNA(Glu). The polypeptide is Glutamate--tRNA ligase 1 (Campylobacter fetus subsp. fetus (strain 82-40)).